An 82-amino-acid chain; its full sequence is Omega-conotoxin PnVIB (82 aa).

Positions 1–22 (MKLTCMMIVAVLFLTAWTVVTA) are cleaved as a signal peptide. Residues 23 to 52 (EPHSSNVLENLYLKAHHEMENPEASKLNTR) constitute a propeptide that is removed on maturation. 3 disulfide bridges follow: cysteine 56–cysteine 73, cysteine 63–cysteine 77, and cysteine 72–cysteine 81.

As to expression, expressed by the venom duct.

The protein resides in the secreted. Omega-conotoxins act at presynaptic membranes, they bind and block voltage-gated calcium channels (Cav). Acts on high voltage-activated (HVA) calcium currents in molluscan neurons. In Conus pennaceus (Feathered cone), this protein is Omega-conotoxin PnVIB.